A 77-amino-acid chain; its full sequence is Exodeoxyribonuclease 7 small subunit (77 aa).

It belongs to the XseB family. As to quaternary structure, heterooligomer composed of large and small subunits.

Its subcellular location is the cytoplasm. The enzyme catalyses Exonucleolytic cleavage in either 5'- to 3'- or 3'- to 5'-direction to yield nucleoside 5'-phosphates.. Functionally, bidirectionally degrades single-stranded DNA into large acid-insoluble oligonucleotides, which are then degraded further into small acid-soluble oligonucleotides. The polypeptide is Exodeoxyribonuclease 7 small subunit (Alkaliphilus oremlandii (strain OhILAs) (Clostridium oremlandii (strain OhILAs))).